We begin with the raw amino-acid sequence, 519 residues long: Cytosol aminopeptidase (519 aa).

Serine 42 carries the phosphoserine modification. Lysine 45 bears the N6-succinyllysine mark. Serine 54 bears the Phosphoserine mark. 2 positions are modified to N6-succinyllysine: lysine 61 and lysine 103. Serine 180 and serine 194 each carry phosphoserine. 2 residues coordinate Zn(2+): leucine 202 and methionine 203. The residue at position 221 (lysine 221) is an N6-acetyllysine; alternate. Lysine 221 is subject to N6-succinyllysine; alternate. The residue at position 238 (serine 238) is a Phosphoserine. Positions 282 and 287 each coordinate Zn(2+). Substrate-binding residues include lysine 282, aspartate 287, serine 292, and lysine 294. A Mg(2+)-binding site is contributed by aspartate 287. The active site involves lysine 294. Residues arginine 303, aspartate 305, aspartate 364, and glutamate 366 each contribute to the Zn(2+) site. Substrate is bound by residues aspartate 305 and aspartate 364. Aspartate 364 and glutamate 366 together coordinate Mg(2+). Arginine 368 is a catalytic residue. The residue at position 455 (lysine 455) is an N6-acetyllysine; alternate. An N6-succinyllysine; alternate modification is found at lysine 455. Lysine 476 bears the N6-succinyllysine mark. Lysine 489 carries the post-translational modification N6-acetyllysine; alternate. The residue at position 489 (lysine 489) is an N6-succinyllysine; alternate.

The protein belongs to the peptidase M17 family. As to quaternary structure, homohexamer. It depends on Zn(2+) as a cofactor. The cofactor is Mn(2+).

It is found in the cytoplasm. It catalyses the reaction Release of an N-terminal amino acid, Xaa-|-Yaa-, in which Xaa is preferably Leu, but may be other amino acids including Pro although not Arg or Lys, and Yaa may be Pro. Amino acid amides and methyl esters are also readily hydrolyzed, but rates on arylamides are exceedingly low.. The catalysed reaction is an S-substituted L-cysteinylglycine + H2O = an S-substituted L-cysteine + glycine. The enzyme catalyses L-cysteinylglycine + H2O = L-cysteine + glycine. It carries out the reaction S-benzyl-L-cysteinylglycine + H2O = S-benzyl-L-cysteine + glycine. It catalyses the reaction Release of N-terminal proline from a peptide.. Bimane-S-cysteinylglycine-hydrolyzing activity is inhibited by o-phenanthroline or bestatin, and is activated by the addition of zinc chloride. In terms of biological role, cytosolic metallopeptidase that catalyzes the removal of unsubstituted N-terminal hydrophobic amino acids from various peptides. The presence of Zn(2+) ions is essential for the peptidase activity, and the association with other cofactors can modulate the substrate spectificity of the enzyme. For instance, in the presence of Mn(2+), it displays a specific Cys-Gly hydrolyzing activity of Cys-Gly-S-conjugates. Involved in the metabolism of glutathione and in the degradation of glutathione S-conjugates, which may play a role in the control of the cell redox status. The sequence is that of Cytosol aminopeptidase from Rattus norvegicus (Rat).